The sequence spans 227 residues: Orotidine 5'-phosphate decarboxylase (227 aa).

Substrate-binding positions include D8, K30, D58–T67, T117, R177, Q186, G206, and R207. K60 serves as the catalytic Proton donor.

The protein belongs to the OMP decarboxylase family. Type 1 subfamily. As to quaternary structure, homodimer.

It carries out the reaction orotidine 5'-phosphate + H(+) = UMP + CO2. Its pathway is pyrimidine metabolism; UMP biosynthesis via de novo pathway; UMP from orotate: step 2/2. Catalyzes the decarboxylation of orotidine 5'-monophosphate (OMP) to uridine 5'-monophosphate (UMP). In Campylobacter lari (strain RM2100 / D67 / ATCC BAA-1060), this protein is Orotidine 5'-phosphate decarboxylase.